A 474-amino-acid polypeptide reads, in one-letter code: Lysosomal protective protein (474 aa).

Positions 1–23 (MPGTALSPLLLLLLLSWASRNEA) are cleaved as a signal peptide. 4 disulfide bridges follow: Cys83/Cys356, Cys235/Cys251, Cys236/Cys241, and Cys276/Cys325. Asn140 carries an N-linked (GlcNAc...) (high mannose) asparagine glycan. The active site involves Ser173. N-linked (GlcNAc...) (high mannose) asparagine glycosylation occurs at Asn327. Active-site residues include Asp394 and His451.

The protein belongs to the peptidase S10 family. As to quaternary structure, heterodimer of a 32 kDa chain and a 20 kDa chain; disulfide-linked.

It localises to the lysosome. The catalysed reaction is Release of a C-terminal amino acid with broad specificity.. Functionally, protective protein appears to be essential for both the activity of beta-galactosidase and neuraminidase, it associates with these enzymes and exerts a protective function necessary for their stability and activity. This protein is also a carboxypeptidase and can deamidate tachykinins. The protein is Lysosomal protective protein (Ctsa) of Mus musculus (Mouse).